The primary structure comprises 843 residues: Protein P (843 aa).

Positions M1–Q177 are terminal protein domain (TP). A spacer region spans residues D178–I346. The interval Q220–T265 is disordered. The span at L223–R235 shows a compositional bias: low complexity. The segment at E347–Q690 is polymerase/reverse transcriptase domain (RT). Residues E357–I600 form the Reverse transcriptase domain. Mg(2+)-binding residues include D429, D551, and D552.

The protein belongs to the hepadnaviridae P protein family.

The enzyme catalyses DNA(n) + a 2'-deoxyribonucleoside 5'-triphosphate = DNA(n+1) + diphosphate. It carries out the reaction Endonucleolytic cleavage to 5'-phosphomonoester.. With respect to regulation, activated by host HSP70 and HSP40 in vitro to be able to bind the epsilon loop of the pgRNA. Because deletion of the RNase H region renders the protein partly chaperone-independent, the chaperones may be needed indirectly to relieve occlusion of the RNA-binding site by this domain. Inhibited by several reverse-transcriptase inhibitors: Lamivudine, Adefovir and Entecavir. Its function is as follows. Multifunctional enzyme that converts the viral RNA genome into dsDNA in viral cytoplasmic capsids. This enzyme displays a DNA polymerase activity that can copy either DNA or RNA templates, and a ribonuclease H (RNase H) activity that cleaves the RNA strand of RNA-DNA heteroduplexes in a partially processive 3'- to 5'-endonucleasic mode. Neo-synthesized pregenomic RNA (pgRNA) are encapsidated together with the P protein, and reverse-transcribed inside the nucleocapsid. Initiation of reverse-transcription occurs first by binding the epsilon loop on the pgRNA genome, and is initiated by protein priming, thereby the 5'-end of (-)DNA is covalently linked to P protein. Partial (+)DNA is synthesized from the (-)DNA template and generates the relaxed circular DNA (RC-DNA) genome. After budding and infection, the RC-DNA migrates in the nucleus, and is converted into a plasmid-like covalently closed circular DNA (cccDNA). The activity of P protein does not seem to be necessary for cccDNA generation, and is presumably released from (+)DNA by host nuclear DNA repair machinery. This Hepatitis B virus genotype B2 (isolate Vietnam/9873/1997) (HBV-B) protein is Protein P.